Reading from the N-terminus, the 372-residue chain is Mitogen-activated protein kinase homolog NTF3 (372 aa).

One can recognise a Protein kinase domain in the interval 32–319 (YVPIKPIGRG…VIEALQHPYM (288 aa)). ATP-binding positions include 38-46 (IGRGAYGIV) and Lys-61. Residue Asp-158 is the Proton acceptor of the active site. Thr-191 is subject to Phosphothreonine. The TXY motif lies at 191 to 193 (TEY). The residue at position 193 (Tyr-193) is a Phosphotyrosine.

It belongs to the protein kinase superfamily. CMGC Ser/Thr protein kinase family. MAP kinase subfamily. Requires Mg(2+) as cofactor. In terms of processing, dually phosphorylated on Thr-191 and Tyr-193, which activates the enzyme. Very low autophosphorylation, although dramatically increased when Mn(2+) is added to the reaction instead of Mg(2+). As to expression, ubiquitous.

It catalyses the reaction L-seryl-[protein] + ATP = O-phospho-L-seryl-[protein] + ADP + H(+). The catalysed reaction is L-threonyl-[protein] + ATP = O-phospho-L-threonyl-[protein] + ADP + H(+). With respect to regulation, activated by tyrosine and threonine phosphorylation. The polypeptide is Mitogen-activated protein kinase homolog NTF3 (NTF3) (Nicotiana tabacum (Common tobacco)).